Reading from the N-terminus, the 51-residue chain is Magnetosome protein Mms5 (51 aa).

The Lumenal portion of the chain corresponds to 1 to 8; it reads MLSAKGVS. Residues 9 to 16 form an LG region region; it reads LGLGLGLG. The chain crosses the membrane as a helical span at residues 9–29; it reads LGLGLGLGAWGPVLLGVVGVA. Topologically, residues 30-51 are cytoplasmic; sequence GALALYGYYKNRNAEPAAAEAV.

It belongs to the magnetosome MamD/Mms5 family. In terms of processing, may undergo N-terminal cleavage.

Its subcellular location is the magnetosome membrane. Its function is as follows. Might be involved in magnetite crystal growth. In Magnetospirillum gryphiswaldense (strain DSM 6361 / JCM 21280 / NBRC 15271 / MSR-1), this protein is Magnetosome protein Mms5.